We begin with the raw amino-acid sequence, 392 residues long: Putative non-inhibitory serpin-10 (392 aa).

Residues 333 to 357 are RCL; sequence GTTAVEATYSCCSPTYSGPESPKPR.

The protein belongs to the serpin family.

This is Putative non-inhibitory serpin-10 from Oryza sativa subsp. japonica (Rice).